The chain runs to 181 residues: tRNA (cytidine(56)-2'-O)-methyltransferase (181 aa).

Residues Leu88, 115–119, and 133–140 contribute to the S-adenosyl-L-methionine site; these read GGEKV and IGNQPHSE.

It belongs to the aTrm56 family. Homodimer.

It localises to the cytoplasm. The catalysed reaction is cytidine(56) in tRNA + S-adenosyl-L-methionine = 2'-O-methylcytidine(56) in tRNA + S-adenosyl-L-homocysteine + H(+). Its function is as follows. Specifically catalyzes the AdoMet-dependent 2'-O-ribose methylation of cytidine at position 56 in tRNAs. In Thermofilum pendens (strain DSM 2475 / Hrk 5), this protein is tRNA (cytidine(56)-2'-O)-methyltransferase.